We begin with the raw amino-acid sequence, 118 residues long: Small ribosomal subunit protein bS6 (118 aa).

Positions 98–118 are disordered; sequence TAAPAAKVAPVETAPAAEAAE. A compositionally biased stretch (low complexity) spans 99 to 118; it reads AAPAAKVAPVETAPAAEAAE.

The protein belongs to the bacterial ribosomal protein bS6 family.

Its function is as follows. Binds together with bS18 to 16S ribosomal RNA. This chain is Small ribosomal subunit protein bS6, found in Geobacter metallireducens (strain ATCC 53774 / DSM 7210 / GS-15).